The chain runs to 130 residues: Histone H2B.2 (130 aa).

The segment covering 1–19 (MAPKAEKKPASKAPAEKKP) has biased composition (basic and acidic residues). The tract at residues 1–38 (MAPKAEKKPASKAPAEKKPAAKKTASTDGAKKRTKARK) is disordered. 2 positions are modified to N6-acetyllysine; alternate: lysine 7 and lysine 8. Glycyl lysine isopeptide (Lys-Gly) (interchain with G-Cter in SUMO); alternate cross-links involve residues lysine 7 and lysine 8. Position 11 is a phosphoserine (serine 11). An N6-acetyllysine modification is found at lysine 12. Lysine 17 bears the N6-acetyllysine; alternate mark. Residue lysine 17 forms a Glycyl lysine isopeptide (Lys-Gly) (interchain with G-Cter in SUMO); alternate linkage. Residue lysine 18 forms a Glycyl lysine isopeptide (Lys-Gly) (interchain with G-Cter in SUMO) linkage. Lysine 124 is covalently cross-linked (Glycyl lysine isopeptide (Lys-Gly) (interchain with G-Cter in ubiquitin)).

Belongs to the histone H2B family. In terms of assembly, the nucleosome is a histone octamer containing two molecules each of H2A, H2B, H3 and H4 assembled in one H3-H4 heterotetramer and two H2A-H2B heterodimers. The octamer wraps approximately 147 bp of DNA. In terms of processing, monoubiquitinated by the UBC2-BRE1 complex to form H2BK123ub1. H2BK123ub1 gives a specific tag for epigenetic transcriptional activation and is also prerequisite for H3K4me and H3K79me formation. H2BK123ub1 also modulates the formation of double-strand breaks during meiosis and is a prerequisite for DNA-damage checkpoint activation. Phosphorylated by STE20 to form H2BS10ph during progression through meiotic prophase. May be correlated with chromosome condensation. Post-translationally, acetylated by GCN5 to form H2BK11ac and H2BK16ac. H2BK16ac can also be formed by ESA1. Acetylation of N-terminal lysines and particularly formation of H2BK11acK16ac has a positive effect on transcription. In terms of processing, sumoylation to form H2BK6su or H2BK7su, and probably also H2BK16su or H2BK17su, occurs preferentially near the telomeres and represses gene transcription.

The protein localises to the nucleus. It localises to the chromosome. In terms of biological role, core component of nucleosome. Nucleosomes wrap and compact DNA into chromatin, limiting DNA accessibility to the cellular machineries which require DNA as a template. Histones thereby play a central role in transcription regulation, DNA repair, DNA replication and chromosomal stability. DNA accessibility is regulated via a complex set of post-translational modifications of histones, also called histone code, and nucleosome remodeling. In Candida albicans (strain SC5314 / ATCC MYA-2876) (Yeast), this protein is Histone H2B.2 (HTB2).